Consider the following 628-residue polypeptide: Serine/threonine-protein kinase Nek11 (628 aa).

A Protein kinase domain is found at 30–288 (YVLQQKLGSG…AADILKAPYM (259 aa)). ATP is bound by residues 36 to 44 (LGSGSFGTV) and Lys-62. Asp-159 serves as the catalytic Proton acceptor. Ser-274 is modified (phosphoserine; by CHEK1). A coiled-coil region spans residues 347–385 (WLRKLQAADERARRLKKIAEENYKENDKRMQALRSRNVG). Positions 452–463 (SEDSEEQEEEMI) are enriched in acidic residues. The interval 452 to 475 (SEDSEEQEEEMIFSEAGGDTKEEE) is disordered.

Belongs to the protein kinase superfamily. NEK Ser/Thr protein kinase family. NIMA subfamily. In terms of assembly, interacts with NEK2. The cofactor is Mn(2+). It depends on Mg(2+) as a cofactor. Post-translationally, phosphorylated by NEK2. Phosphorylation at Ser-274 is important for its activation.

The protein resides in the nucleus. Its subcellular location is the nucleolus. The enzyme catalyses L-seryl-[protein] + ATP = O-phospho-L-seryl-[protein] + ADP + H(+). The catalysed reaction is L-threonyl-[protein] + ATP = O-phospho-L-threonyl-[protein] + ADP + H(+). Its activity is regulated as follows. Autorepressed by intramolecular binding of the C-terminus which dissociates following phosphorylation by NEK2. Activated in response to DNA damage. Inhibited by zinc. Its function is as follows. Protein kinase which plays an important role in the G2/M checkpoint response to DNA damage. Controls degradation of CDC25A by directly phosphorylating it on residues whose phosphorylation is required for BTRC-mediated polyubiquitination and degradation. In Mus musculus (Mouse), this protein is Serine/threonine-protein kinase Nek11.